The chain runs to 269 residues: Fructose-2,6-bisphosphatase TIGAR (269 aa).

His11 (tele-phosphohistidine intermediate) is an active-site residue. Glu89 acts as the Proton donor/acceptor in catalysis.

Belongs to the phosphoglycerate mutase family. As to quaternary structure, interacts with HK2; the interaction increases hexokinase HK2 activity in a hypoxia- and HIF1A-dependent manner, resulting in the regulation of mitochondrial membrane potential, thus increasing NADPH production and decreasing intracellular ROS levels. Expressed in olfactory bulb, cerebellum, and cortex. Expressed in neurons and astrocytes (at protein level). Expressed in intestinal crypt.

It localises to the cytoplasm. Its subcellular location is the nucleus. It is found in the mitochondrion. It carries out the reaction beta-D-fructose 2,6-bisphosphate + H2O = beta-D-fructose 6-phosphate + phosphate. In terms of biological role, fructose-bisphosphatase hydrolyzing fructose-2,6-bisphosphate as well as fructose-1,6-bisphosphate. Acts as a negative regulator of glycolysis by lowering intracellular levels of fructose-2,6-bisphosphate in a p53/TP53-dependent manner, resulting in the pentose phosphate pathway (PPP) activation and NADPH production. Contributes to the generation of reduced glutathione to cause a decrease in intracellular reactive oxygen species (ROS) content, correlating with its ability to protect cells from oxidative or metabolic stress-induced cell death. Plays a role in promoting protection against cell death during hypoxia by decreasing mitochondria ROS levels in a HK2-dependent manner through a mechanism that is independent of its fructose-bisphosphatase activity. In response to cardiac damage stress, mediates p53-induced inhibition of myocyte mitophagy through ROS levels reduction and the subsequent inactivation of BNIP3. Reduced mitophagy results in an enhanced apoptotic myocyte cell death, and exacerbates cardiac damage. Plays a role in adult intestinal regeneration; contributes to the growth, proliferation and survival of intestinal crypts following tissue ablation. Plays a neuroprotective role against ischemic brain damage by enhancing PPP flux and preserving mitochondria functions. Protects glioma cells from hypoxia- and ROS-induced cell death by inhibiting glycolysis and activating mitochondrial energy metabolism and oxygen consumption in a TKTL1-dependent and p53/TP53-independent manner. Plays a role in cancer cell survival by promoting DNA repair through activating PPP flux in a CDK5-ATM-dependent signaling pathway during hypoxia and/or genome stress-induced DNA damage responses. Involved in intestinal tumor progression. In Mus musculus (Mouse), this protein is Fructose-2,6-bisphosphatase TIGAR.